Here is a 532-residue protein sequence, read N- to C-terminus: Aspartate--tRNA ligase 1, cytoplasmic (532 aa).

The stretch at 7–41 (LEECGEKISKKESKKRAAKLEKLLRKQEREEATSS) forms a coiled coil. The segment at 31 to 58 (RKQEREEATSSSLSLEEEDESCSSNYGD) is disordered. The OB DNA-binding region spans 88–169 (VSIRGRLHKN…QVEIHVRKMY (82 aa)). E260 serves as a coordination point for L-aspartate. Positions 282–285 (QLHK) are aspartate. R304 contacts L-aspartate. ATP-binding positions include 304-306 (RAE), 312-314 (RHL), and E455. Mg(2+)-binding residues include E455 and S458. The L-aspartate site is built by S458 and R462. An ATP-binding site is contributed by 503-506 (GLER).

It belongs to the class-II aminoacyl-tRNA synthetase family. Type 2 subfamily.

It is found in the cytoplasm. The protein resides in the cytosol. The enzyme catalyses tRNA(Asp) + L-aspartate + ATP = L-aspartyl-tRNA(Asp) + AMP + diphosphate. Catalyzes the specific attachment of an amino acid to its cognate tRNA in a 2 step reaction: the amino acid (AA) is first activated by ATP to form AA-AMP and then transferred to the acceptor end of the tRNA. This chain is Aspartate--tRNA ligase 1, cytoplasmic, found in Arabidopsis thaliana (Mouse-ear cress).